A 173-amino-acid polypeptide reads, in one-letter code: NADH-ubiquinone oxidoreductase chain 6 (173 aa).

The next 6 membrane-spanning stretches (helical) occupy residues 1–21, 27–47, 48–68, 87–107, 113–133, and 139–159; these read MTYFVVFLGLCFVLGGLAVAS, YGVVGLVLASVAGCGWLLSLG, VSFVSLVLFMVYLGGMLVVFV, VVGYGMSFIVVLVVGVVVGGF, FGVVTVDSAGVFFARLDFSGV, and CGVGMFLVAGWGLLLTLFVVL.

This sequence belongs to the complex I subunit 6 family.

The protein localises to the mitochondrion membrane. The catalysed reaction is a ubiquinone + NADH + 5 H(+)(in) = a ubiquinol + NAD(+) + 4 H(+)(out). Its function is as follows. Core subunit of the mitochondrial membrane respiratory chain NADH dehydrogenase (Complex I) that is believed to belong to the minimal assembly required for catalysis. Complex I functions in the transfer of electrons from NADH to the respiratory chain. The immediate electron acceptor for the enzyme is believed to be ubiquinone. The sequence is that of NADH-ubiquinone oxidoreductase chain 6 (MT-ND6) from Cepphus grylle (Black guillemot).